Here is a 428-residue protein sequence, read N- to C-terminus: Endoplasmic reticulum junction formation protein lunapark (428 aa).

Gly2 carries N-myristoyl glycine lipidation. Residues 2-45 lie on the Cytoplasmic side of the membrane; sequence GGLFSRWRTKLSTVEVLESIDKEIQALEEFREKNQRLQKLRVGR. Positions 16–43 form a coiled coil; it reads EVLESIDKEIQALEEFREKNQRLQKLRV. Residues 46 to 66 form a helical membrane-spanning segment; the sequence is LILYSSVLYLFTCLIVYLWYL. The Lumenal portion of the chain corresponds to 67–77; that stretch reads PDEFTARLAMT. A helical membrane pass occupies residues 78–98; the sequence is LPFFAFPLIIWSIRTVIIFFF. Over 99-428 the chain is Cytoplasmic; the sequence is SKRTERNNEA…ELNGESLTAE (330 aa). Residues 102-128 adopt a coiled-coil conformation; that stretch reads TERNNEALDDLKSQRKKILEEVMEKET. Phosphoserine is present on residues Ser114, Ser153, Ser177, Ser182, and Ser194. The segment at 143–248 is disordered; the sequence is SKKAKECEPP…PPGPPLARPI (106 aa). Residues 185–198 are compositionally biased toward pro residues; it reads QGPPPQVPVSPGPP. Residues Thr211 and Thr213 each carry the phosphothreonine modification. Phosphoserine occurs at positions 217 and 227. The C4-type; plays a role in ER morphology zinc finger occupies 276–301; that stretch reads CQQCFSHNGMALKEEFEYIAFRCAYC. Phosphoserine is present on residues Ser321, Ser353, and Ser384. A disordered region spans residues 361–428; the sequence is NNTEQTDDKI…ELNGESLTAE (68 aa). The span at 386-401 shows a compositional bias: acidic residues; it reads SEEPEEKQETENEEAS. Ser414 bears the Phosphoserine mark.

The protein belongs to the lunapark family. In terms of assembly, homodimer; homodimerization requires the C4-type zinc finger motif and decreases during mitosis in a phosphorylation-dependent manner. Post-translationally, myristoylated; myristoylation is necessary for the endoplasmic reticulum (ER) three-way ER tubular junction formation, but is not required neither for membrane translocation, membrane topology formation, nor for the specific localization to ER membranes. Phosphorylated. Phosphorylation occurs at Ser-177, Ser-182, Ser-217, Ser-227, Ser-321 and Ser-384 during interphase. Phosphorylation occurs at Ser-114, Ser-153, Ser-194, Thr-211 and Ser-353 during mitosis; these phosphorylations reduce both its homodimerization and the ER three-way tubular junction formation. In terms of processing, subject to proteasomal degradation following phosphorylation during mitosis.

The protein resides in the endoplasmic reticulum membrane. In terms of biological role, endoplasmic reticulum (ER)-shaping membrane protein that plays a role in determining ER morphology. Involved in the stabilization of nascent three-way ER tubular junctions within the ER network. May also play a role as a curvature-stabilizing protein within three-way ER tubular junction network. May be involved in limb and central nervous system development. The sequence is that of Endoplasmic reticulum junction formation protein lunapark from Pongo abelii (Sumatran orangutan).